The following is a 375-amino-acid chain: DNA replication and repair protein RecF (375 aa).

Glycine 30–threonine 37 provides a ligand contact to ATP.

Belongs to the RecF family.

The protein localises to the cytoplasm. In terms of biological role, the RecF protein is involved in DNA metabolism; it is required for DNA replication and normal SOS inducibility. RecF binds preferentially to single-stranded, linear DNA. It also seems to bind ATP. The sequence is that of DNA replication and repair protein RecF from Bacillus thuringiensis (strain Al Hakam).